Reading from the N-terminus, the 269-residue chain is Formamidopyrimidine-DNA glycosylase (269 aa).

Residue P2 is the Schiff-base intermediate with DNA of the active site. Residue E3 is the Proton donor of the active site. Catalysis depends on K57, which acts as the Proton donor; for beta-elimination activity. 3 residues coordinate DNA: H90, R109, and K150. Residues 235-269 form an FPG-type zinc finger; sequence QVYGRKGEPCRVCGTPIVATKHAQRATFYCRQCQK. R259 (proton donor; for delta-elimination activity) is an active-site residue.

Belongs to the FPG family. In terms of assembly, monomer. The cofactor is Zn(2+).

It carries out the reaction Hydrolysis of DNA containing ring-opened 7-methylguanine residues, releasing 2,6-diamino-4-hydroxy-5-(N-methyl)formamidopyrimidine.. The enzyme catalyses 2'-deoxyribonucleotide-(2'-deoxyribose 5'-phosphate)-2'-deoxyribonucleotide-DNA = a 3'-end 2'-deoxyribonucleotide-(2,3-dehydro-2,3-deoxyribose 5'-phosphate)-DNA + a 5'-end 5'-phospho-2'-deoxyribonucleoside-DNA + H(+). Involved in base excision repair of DNA damaged by oxidation or by mutagenic agents. Acts as a DNA glycosylase that recognizes and removes damaged bases. Has a preference for oxidized purines, such as 7,8-dihydro-8-oxoguanine (8-oxoG). Has AP (apurinic/apyrimidinic) lyase activity and introduces nicks in the DNA strand. Cleaves the DNA backbone by beta-delta elimination to generate a single-strand break at the site of the removed base with both 3'- and 5'-phosphates. In Escherichia coli O6:H1 (strain CFT073 / ATCC 700928 / UPEC), this protein is Formamidopyrimidine-DNA glycosylase.